The following is a 223-amino-acid chain: Histone H1.5 (223 aa).

Low complexity predominate over residues 1–14; sequence MSETAPAETAAPAP. The tract at residues 1-56 is disordered; the sequence is MSETAPAETAAPAPVEKSPAKKKTTKKAGAAKRKATGPPVSELITKAVSASKERGG. Serine 2 carries the N-acetylserine modification. Serine 2 bears the Phosphoserine mark. At lysine 17 the chain carries N6-acetyllysine. Serine 18 bears the Phosphoserine mark. Residues 20-35 show a composition bias toward basic residues; the sequence is AKKKTTKKAGAAKRKA. Lysine 27 bears the N6-methyllysine mark. The residue at position 34 (lysine 34) is an N6-(beta-hydroxybutyryl)lysine; alternate. An N6-succinyllysine; alternate modification is found at lysine 34. Position 36 is a phosphothreonine (threonine 36). One can recognise an H15 domain in the interval 36-109; the sequence is TGPPVSELIT…GASGSFKLNK (74 aa). At lysine 46 the chain carries N6-acetyllysine. Lysine 52 is subject to N6-(beta-hydroxybutyryl)lysine. At arginine 54 the chain carries Citrulline. Residue lysine 64 is modified to N6-(beta-hydroxybutyryl)lysine. Lysine 75 bears the N6-acetyllysine mark. N6-(beta-hydroxybutyryl)lysine is present on residues lysine 85, lysine 90, and lysine 106. Residues 91-223 form a disordered region; the sequence is GTLVQTKGTG…KAKKAVSKKK (133 aa). Residues 119–130 are compositionally biased toward basic residues; the sequence is KAKKTGAAKAKK. 2 positions are modified to phosphothreonine: threonine 135 and threonine 152. A compositionally biased stretch (basic residues) spans 137 to 158; that stretch reads KKPKKTAGAKKTVKKTPKKAKK. The residue at position 165 (lysine 165) is an N6-acetyllysine. The span at 166 to 184 shows a compositional bias: basic residues; sequence KVAKSPKKAKAAAKPKKAA. 2 positions are modified to phosphoserine: serine 170 and serine 186. Basic residues predominate over residues 191–223; it reads KAVKSKASKPKVTKPKTAKPKAAKAKKAVSKKK.

It belongs to the histone H1/H5 family. Interacts with MSX1. H1 histones are progressively phosphorylated during the cell cycle, becoming maximally phosphorylated during late G2 phase and M phase, and being dephosphorylated sharply thereafter. In terms of processing, citrullination at Arg-54 (H1R54ci) by PADI4 takes place within the DNA-binding site of H1 and results in its displacement from chromatin and global chromatin decondensation, thereby promoting pluripotency and stem cell maintenance. Post-translationally, hydroxybutyrylation of histones is induced by starvation.

It is found in the nucleus. The protein localises to the chromosome. Functionally, histone H1 protein binds to linker DNA between nucleosomes forming the macromolecular structure known as the chromatin fiber. Histones H1 are necessary for the condensation of nucleosome chains into higher-order structured fibers. Also acts as a regulator of individual gene transcription through chromatin remodeling, nucleosome spacing and DNA methylation. The protein is Histone H1.5 (H1-5) of Mus musculus (Mouse).